The following is a 150-amino-acid chain: Large ribosomal subunit protein bL9 (150 aa).

This sequence belongs to the bacterial ribosomal protein bL9 family.

Functionally, binds to the 23S rRNA. The polypeptide is Large ribosomal subunit protein bL9 (Pediococcus pentosaceus (strain ATCC 25745 / CCUG 21536 / LMG 10740 / 183-1w)).